The following is a 434-amino-acid chain: Glutamyl-tRNA reductase (434 aa).

Residues 54-57 (TCNR), S113, 118-120 (EAQ), and Q124 each bind substrate. C55 functions as the Nucleophile in the catalytic mechanism. 193–198 (GGGEVS) is a binding site for NADP(+).

The protein belongs to the glutamyl-tRNA reductase family. In terms of assembly, homodimer.

The enzyme catalyses (S)-4-amino-5-oxopentanoate + tRNA(Glu) + NADP(+) = L-glutamyl-tRNA(Glu) + NADPH + H(+). It functions in the pathway porphyrin-containing compound metabolism; protoporphyrin-IX biosynthesis; 5-aminolevulinate from L-glutamyl-tRNA(Glu): step 1/2. The protein operates within porphyrin-containing compound metabolism; chlorophyll biosynthesis. Catalyzes the NADPH-dependent reduction of glutamyl-tRNA(Glu) to glutamate 1-semialdehyde (GSA). The polypeptide is Glutamyl-tRNA reductase (Chloroflexus aurantiacus (strain ATCC 29366 / DSM 635 / J-10-fl)).